Consider the following 121-residue polypeptide: Small ribosomal subunit protein uS11 (121 aa).

It belongs to the universal ribosomal protein uS11 family. As to quaternary structure, part of the 30S ribosomal subunit. Interacts with proteins S7 and S18. Binds to IF-3.

Its function is as follows. Located on the platform of the 30S subunit, it bridges several disparate RNA helices of the 16S rRNA. Forms part of the Shine-Dalgarno cleft in the 70S ribosome. In Mycoplasmoides gallisepticum (strain R(low / passage 15 / clone 2)) (Mycoplasma gallisepticum), this protein is Small ribosomal subunit protein uS11.